A 129-amino-acid chain; its full sequence is Putative zinc finger protein 702 (129 aa).

C2H2-type zinc fingers lie at residues 34–56 (YKCD…HRCH), 62–84 (YKCN…KAIH), and 90–112 (HKCN…HRLH).

Belongs to the krueppel C2H2-type zinc-finger protein family.

It is found in the nucleus. Functionally, may be involved in transcriptional regulation. The chain is Putative zinc finger protein 702 (ZNF702P) from Homo sapiens (Human).